A 209-amino-acid chain; its full sequence is Large ribosomal subunit protein uL3 (209 aa).

At Gln150 the chain carries N5-methylglutamine.

The protein belongs to the universal ribosomal protein uL3 family. Part of the 50S ribosomal subunit. Forms a cluster with proteins L14 and L19. Post-translationally, methylated by PrmB.

In terms of biological role, one of the primary rRNA binding proteins, it binds directly near the 3'-end of the 23S rRNA, where it nucleates assembly of the 50S subunit. The protein is Large ribosomal subunit protein uL3 of Salmonella paratyphi C (strain RKS4594).